The chain runs to 678 residues: UvrABC system protein C (678 aa).

The GIY-YIG domain maps to 16 to 95 (VEPGVYRFRD…IKEFDPRFNI (80 aa)). A UVR domain is found at 208 to 243 (DRLIREMEQQMTAAAEDLDFERAARLRDNIGAMRRA). Residues 649 to 667 (EAPPEPGAEAPPDSGAAAA) show a composition bias toward low complexity. Residues 649–678 (EAPPEPGAEAPPDSGAAAAVMGNDQSRVPG) are disordered.

It belongs to the UvrC family. Interacts with UvrB in an incision complex.

Its subcellular location is the cytoplasm. Functionally, the UvrABC repair system catalyzes the recognition and processing of DNA lesions. UvrC both incises the 5' and 3' sides of the lesion. The N-terminal half is responsible for the 3' incision and the C-terminal half is responsible for the 5' incision. This Mycolicibacterium gilvum (strain PYR-GCK) (Mycobacterium gilvum (strain PYR-GCK)) protein is UvrABC system protein C.